The primary structure comprises 437 residues: Protein RecA (437 aa).

69-76 (GPESSGKT) serves as a coordination point for ATP. Positions 343-437 (HDAAVRTSPD…GNGKSVKRKG (95 aa)) are disordered. Composition is skewed to polar residues over residues 350–371 (SPDTNSRKVSGTGAVHTTSGSP), 380–391 (GAVNNSRDSTGG), and 400–426 (LNLSVNRDVSTDTVSSKISDATHNQKP).

It belongs to the RecA family.

It localises to the cytoplasm. Can catalyze the hydrolysis of ATP in the presence of single-stranded DNA, the ATP-dependent uptake of single-stranded DNA by duplex DNA, and the ATP-dependent hybridization of homologous single-stranded DNAs. It interacts with LexA causing its activation and leading to its autocatalytic cleavage. The protein is Protein RecA of Tropheryma whipplei (strain Twist) (Whipple's bacillus).